The sequence spans 320 residues: Malate dehydrogenase (320 aa).

NAD(+) is bound by residues 10–15 (GAGQIG) and D34. Substrate contacts are provided by R83 and R89. NAD(+) is bound by residues N96 and 119-121 (ITN). Residues N121 and R152 each contribute to the substrate site. H176 functions as the Proton acceptor in the catalytic mechanism.

The protein belongs to the LDH/MDH superfamily. MDH type 3 family.

The catalysed reaction is (S)-malate + NAD(+) = oxaloacetate + NADH + H(+). In terms of biological role, catalyzes the reversible oxidation of malate to oxaloacetate. This Jannaschia sp. (strain CCS1) protein is Malate dehydrogenase.